Reading from the N-terminus, the 729-residue chain is MIRTSSVLNSTKYFNSHINHLSSHGDHKQVLSTFSSMLANKLLPDTFTFPSLLKACASLQRLSFGLSIHQQVLVNGFSSDFYISSSLVNLYAKFGLLAHARKVFEEMRERDVVHWTAMIGCYSRAGIVGEACSLVNEMRFQGIKPGPVTLLEMLSGVLEITQLQCLHDFAVIYGFDCDIAVMNSMLNLYCKCDHVGDAKDLFDQMEQRDMVSWNTMISGYASVGNMSEILKLLYRMRGDGLRPDQQTFGASLSVSGTMCDLEMGRMLHCQIVKTGFDVDMHLKTALITMYLKCGKEEASYRVLETIPNKDVVCWTVMISGLMRLGRAEKALIVFSEMLQSGSDLSSEAIASVVASCAQLGSFDLGASVHGYVLRHGYTLDTPALNSLITMYAKCGHLDKSLVIFERMNERDLVSWNAIISGYAQNVDLCKALLLFEEMKFKTVQQVDSFTVVSLLQACSSAGALPVGKLIHCIVIRSFIRPCSLVDTALVDMYSKCGYLEAAQRCFDSISWKDVVSWGILIAGYGFHGKGDIALEIYSEFLHSGMEPNHVIFLAVLSSCSHNGMVQQGLKIFSSMVRDFGVEPNHEHLACVVDLLCRAKRIEDAFKFYKENFTRPSIDVLGIILDACRANGKTEVEDIICEDMIELKPGDAGHYVKLGHSFAAMKRWDDVSESWNQMRSLGLKKLPGWSKIEMNGKTTTFFMNHTSHSDDTVSLLKLLSREMMQFGSNN.

PPR repeat units follow at residues 10–44 (STKYFNSHINHLSSHGDHKQVLSTFSSMLANKLLP), 45–79 (DTFTFPSLLKACASLQRLSFGLSIHQQVLVNGFSS), 80–110 (DFYISSSLVNLYAKFGLLAHARKVFEEMRER), 111–145 (DVVHWTAMIGCYSRAGIVGEACSLVNEMRFQGIKP), 178–208 (DIAVMNSMLNLYCKCDHVGDAKDLFDQMEQR), 209–243 (DMVSWNTMISGYASVGNMSEILKLLYRMRGDGLRP), 244–278 (DQQTFGASLSVSGTMCDLEMGRMLHCQIVKTGFDV), 279–309 (DMHLKTALITMYLKCGKEEASYRVLETIPNK), 310–344 (DVVCWTVMISGLMRLGRAEKALIVFSEMLQSGSDL), 345–379 (SSEAIASVVASCAQLGSFDLGASVHGYVLRHGYTL), 380–414 (DTPALNSLITMYAKCGHLDKSLVIFERMNERDLVS), 415–445 (WNAIISGYAQNVDLCKALLLFEEMKFKTVQQ), 447–481 (DSFTVVSLLQACSSAGALPVGKLIHCIVIRSFIRP), 482–512 (CSLVDTALVDMYSKCGYLEAAQRCFDSISWK), 513–547 (DVVSWGILIAGYGFHGKGDIALEIYSEFLHSGMEP), 548–583 (NHVIFLAVLSSCSHNGMVQQGLKIFSSMVRDFGVEP), and 584–618 (NHEHLACVVDLLCRAKRIEDAFKFYKENFTRPSID). The interval 619 to 694 (VLGIILDACR…LPGWSKIEMN (76 aa)) is type E motif. The tract at residues 695-723 (GKTTTFFMNHTSHSDDTVSLLKLLSREMM) is type E(+) motif.

The protein belongs to the PPR family. PCMP-E subfamily.

This chain is Pentatricopeptide repeat-containing protein At4g04370 (PCMP-E99), found in Arabidopsis thaliana (Mouse-ear cress).